The chain runs to 429 residues: Ribosomal RNA small subunit methyltransferase B (429 aa).

Residues 254-260 (CAAPGGK), Asp-277, Asp-303, and Asp-322 contribute to the S-adenosyl-L-methionine site. The active-site Nucleophile is Cys-375. Positions 397-419 (ALSETGTPDQPGQQNLPGGEEGD) are disordered. The span at 400 to 412 (ETGTPDQPGQQNL) shows a compositional bias: polar residues.

Belongs to the class I-like SAM-binding methyltransferase superfamily. RsmB/NOP family.

It is found in the cytoplasm. The catalysed reaction is cytidine(967) in 16S rRNA + S-adenosyl-L-methionine = 5-methylcytidine(967) in 16S rRNA + S-adenosyl-L-homocysteine + H(+). Its function is as follows. Specifically methylates the cytosine at position 967 (m5C967) of 16S rRNA. This chain is Ribosomal RNA small subunit methyltransferase B, found in Salmonella paratyphi B (strain ATCC BAA-1250 / SPB7).